The chain runs to 161 residues: Phage-like element PBSX protein XkdI (161 aa).

It to B.subtilis YqbI.

The chain is Phage-like element PBSX protein XkdI (xkdI) from Bacillus subtilis (strain 168).